We begin with the raw amino-acid sequence, 475 residues long: 23S rRNA (uracil(1939)-C(5))-methyltransferase RlmD (475 aa).

Residues 1-76 (MHRGDKPVNI…SRFSKAKVRE (76 aa)) form the TRAM domain. Residues Cys-89, Cys-95, Cys-98, and Cys-178 each coordinate [4Fe-4S] cluster. Residues Gln-299, Phe-328, Asn-333, Glu-349, Asp-377, and Asp-398 each contribute to the S-adenosyl-L-methionine site. The active-site Nucleophile is the Cys-431.

The protein belongs to the class I-like SAM-binding methyltransferase superfamily. RNA M5U methyltransferase family. RlmD subfamily.

It carries out the reaction uridine(1939) in 23S rRNA + S-adenosyl-L-methionine = 5-methyluridine(1939) in 23S rRNA + S-adenosyl-L-homocysteine + H(+). Catalyzes the formation of 5-methyl-uridine at position 1939 (m5U1939) in 23S rRNA. This is 23S rRNA (uracil(1939)-C(5))-methyltransferase RlmD from Polynucleobacter necessarius subsp. necessarius (strain STIR1).